We begin with the raw amino-acid sequence, 278 residues long: Bicarbonate transport ATP-binding protein CmpD (278 aa).

One can recognise an ABC transporter domain in the interval 21–254 (LIVENVSKIY…RPRDRERIME (234 aa)). An ATP-binding site is contributed by 57 to 64 (GHSGCGKS).

The protein belongs to the ABC transporter superfamily. Nitrate/nitrite/cyanate uptake transporter (NitT) (TC 3.A.1.16) family. In terms of assembly, the complex is composed of two ATP-binding proteins (CmpC and CmpD), a transmembrane protein (CmpB) and a solute-binding protein (CmpA).

The protein resides in the cell inner membrane. Its function is as follows. Part of the ABC transporter complex CmpABCD involved in bicarbonate transport. Responsible for energy coupling to the transport system. In Synechococcus elongatus (strain ATCC 33912 / PCC 7942 / FACHB-805) (Anacystis nidulans R2), this protein is Bicarbonate transport ATP-binding protein CmpD (cmpD).